Here is a 154-residue protein sequence, read N- to C-terminus: Urease accessory protein UreE (154 aa).

It belongs to the UreE family.

It is found in the cytoplasm. In terms of biological role, involved in urease metallocenter assembly. Binds nickel. Probably functions as a nickel donor during metallocenter assembly. In Prochlorococcus marinus subsp. pastoris (strain CCMP1986 / NIES-2087 / MED4), this protein is Urease accessory protein UreE.